A 503-amino-acid chain; its full sequence is Aminoaldehyde dehydrogenase 2, peroxisomal (503 aa).

The Na(+) site is built by Ile28 and Asp99. The NAD(+) site is built by Trp161 and Lys185. Leu189 contacts Na(+). Ser239 provides a ligand contact to NAD(+). The Proton acceptor role is filled by Glu260. Cys294 (nucleophile) is an active-site residue. The Microbody targeting signal signature appears at 501–503; it reads AKL.

The protein belongs to the aldehyde dehydrogenase family. Forms homodimers.

Its subcellular location is the peroxisome. It catalyses the reaction 3-aminopropanal + NAD(+) + H2O = beta-alanine + NADH + 2 H(+). It carries out the reaction 4-aminobutanal + NAD(+) + H2O = 4-aminobutanoate + NADH + 2 H(+). The enzyme catalyses 4-guanidinobutanal + NAD(+) + H2O = 4-guanidinobutanoate + NADH + 2 H(+). Its pathway is amine and polyamine biosynthesis; betaine biosynthesis via choline pathway; betaine from betaine aldehyde: step 1/1. Functionally, dehydrogenase that catalyzes the oxidation of several aminoaldehydes. Metabolizes and detoxifies aldehyde products of polyamine degradation to non-toxic amino acids. Catalyzes the oxidation of 3-aminopropanal to beta-alanine. Catalyzes the oxidation of 4-aminobutanal to 4-aminobutanoate. Catalyzes the oxidation of 4-guanidinobutanal to 4-guanidinobutanoate. This chain is Aminoaldehyde dehydrogenase 2, peroxisomal, found in Pisum sativum (Garden pea).